The following is a 159-amino-acid chain: Transcription elongation factor GreA (159 aa).

It belongs to the GreA/GreB family.

Its function is as follows. Necessary for efficient RNA polymerase transcription elongation past template-encoded arresting sites. The arresting sites in DNA have the property of trapping a certain fraction of elongating RNA polymerases that pass through, resulting in locked ternary complexes. Cleavage of the nascent transcript by cleavage factors such as GreA or GreB allows the resumption of elongation from the new 3'terminus. GreA releases sequences of 2 to 3 nucleotides. This chain is Transcription elongation factor GreA, found in Mycoplasmoides gallisepticum (strain R(low / passage 15 / clone 2)) (Mycoplasma gallisepticum).